A 694-amino-acid chain; its full sequence is MTRTALVTTALPYANGPLHLGHLVGYIQADIWVRARRLRGDKTWFVCADDTHGTPIMLAAEKAGVTPEAFIANIQASHERDFAAFGVTFDHYDSTNSPVNRELTEAFYAKLEAAGHISRRSVAQFYDTAKGMFLPDRYIKGICPNCGSPDQYGDNCEVCGATYAPTELKEPKSVISGATPELRDSEHFFFEVGHFDGFLREWLAGDVALPGVKAKLKEWLDAEGGLRAWDISRDAPYFGFQIPGQPGKYFYVWLDAPIGYLCSFKTLCAQMGEDFASHLVAGTQTELHHFIGKDIVNFHGLFWPAVLHGTGHRAPTRLHVNGYLTVDGAKMSKSRGTFVMARTFLDVGLEPEALRYYFAAKSSGGVDDLDLNLGDFIARVNADLVGKFVNLASRCAGFIGKRFDGKLADALPDAAQYDRFVAALAPIREAYERNDAASAIRQTMALADEANKYIDDTKPWVIAKQDGADAQLQSVCTQGLNLFRILVAALKPILPRTCAEAEAFLSAPMTSWEDVVRPLTAHTIQPYTALFTRIDPKLIDAMTDASKDTMAAPAAPATTTKPAPSKADAKPAAVANPESQTTNPGFIGMDDFAKLDLRIGKVLVCEFVEGSDKLLRFELDAGELGKRQIFSGIRASYGEPDALVGRSVVFIANLAPRKMRFGISEGMILSAGFDGGALALLDADSGAQPGMPVR.

The short motif at 12-22 (PYANGPLHLGH) is the 'HIGH' region element. Cys143, Cys146, Cys156, and Cys159 together coordinate Zn(2+). The 'KMSKS' region signature appears at 330–334 (KMSKS). Lys333 lines the ATP pocket. Residues 550–573 (MAAPAAPATTTKPAPSKADAKPAA) are compositionally biased toward low complexity. Positions 550–582 (MAAPAAPATTTKPAPSKADAKPAAVANPESQTT) are disordered. The tRNA-binding domain occupies 591-694 (DFAKLDLRIG…SGAQPGMPVR (104 aa)).

It belongs to the class-I aminoacyl-tRNA synthetase family. MetG type 1 subfamily. As to quaternary structure, homodimer. It depends on Zn(2+) as a cofactor.

It is found in the cytoplasm. The enzyme catalyses tRNA(Met) + L-methionine + ATP = L-methionyl-tRNA(Met) + AMP + diphosphate. In terms of biological role, is required not only for elongation of protein synthesis but also for the initiation of all mRNA translation through initiator tRNA(fMet) aminoacylation. This chain is Methionine--tRNA ligase, found in Xanthomonas euvesicatoria pv. vesicatoria (strain 85-10) (Xanthomonas campestris pv. vesicatoria).